We begin with the raw amino-acid sequence, 627 residues long: Pro-interleukin-16 (627 aa).

3 disordered regions span residues 34 to 136 (HMPL…SIKQ), 162 to 267 (SSGE…LTRS), and 316 to 337 (GASP…ETSG). A Phosphoserine modification is found at Ser-217. Over residues 318–337 (SPTSLSNEDSAANGCAETSG) the composition is skewed to polar residues. The tract at residues 401–497 (KQLDSIHVTI…IVTRKLTPET (97 aa)) is interaction with PPP1R12A, PPP1R12B and PPP1R12C. 2 PDZ domains span residues 407–492 (HVTI…VTRK) and 529–614 (TVTL…IKRK).

In terms of assembly, homotetramer. Pro-interleukin-16 interacts (via PDZ 2 domain) with PPP1R12A, PPP1R12B and PPP1R12C. Pro-interleukin-16 interacts with GRIN2A. Pro-interleukin-16 interacts with GABPB1. Pro-interleukin-16 interacts (via PDZ 3 domain) with HDAC3.

The protein localises to the secreted. It is found in the cytoplasm. The protein resides in the nucleus. In terms of biological role, interleukin-16 stimulates a migratory response in CD4+ lymphocytes, monocytes, and eosinophils. Primes CD4+ T-cells for IL-2 and IL-15 responsiveness. Also induces T-lymphocyte expression of interleukin 2 receptor. Ligand for CD4. Its function is as follows. Pro-interleukin-16 is involved in cell cycle progression in T-cells. Appears to be involved in transcriptional regulation of SKP2 and is probably part of a transcriptional repression complex on the core promoter of the SKP2 gene. May act as a scaffold for GABPB1 (the DNA-binding subunit the GABP transcription factor complex) and HDAC3 thus maintaining transcriptional repression and blocking cell cycle progression in resting T-cells. The sequence is that of Pro-interleukin-16 (IL16) from Saimiri sciureus (Common squirrel monkey).